The following is a 324-amino-acid chain: Beta-ketoacyl-[acyl-carrier-protein] synthase III (324 aa).

Catalysis depends on residues C112 and H249. Residues 250–254 (QANDR) are ACP-binding. N279 is an active-site residue.

It belongs to the thiolase-like superfamily. FabH family. As to quaternary structure, homodimer.

The protein resides in the cytoplasm. The catalysed reaction is malonyl-[ACP] + acetyl-CoA + H(+) = 3-oxobutanoyl-[ACP] + CO2 + CoA. It functions in the pathway lipid metabolism; fatty acid biosynthesis. In terms of biological role, catalyzes the condensation reaction of fatty acid synthesis by the addition to an acyl acceptor of two carbons from malonyl-ACP. Catalyzes the first condensation reaction which initiates fatty acid synthesis and may therefore play a role in governing the total rate of fatty acid production. Possesses both acetoacetyl-ACP synthase and acetyl transacylase activities. Its substrate specificity determines the biosynthesis of branched-chain and/or straight-chain of fatty acids. This is Beta-ketoacyl-[acyl-carrier-protein] synthase III from Streptococcus gordonii (strain Challis / ATCC 35105 / BCRC 15272 / CH1 / DL1 / V288).